Consider the following 495-residue polypeptide: UDP-N-acetylmuramate--L-alanine ligase (495 aa).

120-126 (GSHGKTT) contacts ATP.

This sequence belongs to the MurCDEF family.

It localises to the cytoplasm. It catalyses the reaction UDP-N-acetyl-alpha-D-muramate + L-alanine + ATP = UDP-N-acetyl-alpha-D-muramoyl-L-alanine + ADP + phosphate + H(+). Its pathway is cell wall biogenesis; peptidoglycan biosynthesis. Cell wall formation. The chain is UDP-N-acetylmuramate--L-alanine ligase from Rickettsia prowazekii (strain Madrid E).